Reading from the N-terminus, the 578-residue chain is MMSFPIALFADVNQSFRANLVVSSYHHAITFPTVRGANFSTFFPRNFSVSADVWLCGANFSQEWQLMQPVCSTKYDSITIFITVAVVLTLITLWTILGNFFVLMALYRYGTLRTMSNCLIGNLAISDLLLAVTVLPISTVHDLLGYWVFGEFTCTLWLCMDVLYCTASIWGLCTVAFDRYLATVYPVWYHDQRSVRKAVGCIVFVWIFSIVISFAPFIGWQHMIPSFFSFNASIQRYQCILFTSSSYVLYSSMGSFVIPAILMAFMYVRIFVVLHNQSRGVKFKSGLKISSSKYNGCPVINEPSREGINGLGRDVTNTTLLSDAVGSSADLTSNGKDDPRVLATAPIELTEDVPPLNGHHHRTVHETPYVSGLHTKRSNSFALPTELEKKCKPLTNNILHMMDFDRRNSHNAVIQRSASEMVNLDVSKHELLISNVCHRSKSATALTSETGDPLGSLAGPRRSLQCNVGGLVRNKHMTLSMKRRFELREQRATKRMLLIMACFCVCWMPFLFMYILRSVCDTCHMNQHFVAAIIWLGYVNSSLNPVLYTLFNDDFKVAFKRLIGARSPSAYRSPGPRR.

Topologically, residues 1-84 are extracellular; sequence MMSFPIALFA…YDSITIFITV (84 aa). Residues Asn-13, Asn-38, Asn-46, and Asn-59 are each glycosylated (N-linked (GlcNAc...) asparagine). The helical transmembrane segment at 85-107 threads the bilayer; sequence AVVLTLITLWTILGNFFVLMALY. The Cytoplasmic segment spans residues 108–117; that stretch reads RYGTLRTMSN. Residues 118–139 traverse the membrane as a helical segment; it reads CLIGNLAISDLLLAVTVLPIST. Over 140–156 the chain is Extracellular; the sequence is VHDLLGYWVFGEFTCTL. Cys-154 and Cys-239 are joined by a disulfide. The helical transmembrane segment at 157–177 threads the bilayer; that stretch reads WLCMDVLYCTASIWGLCTVAF. Residues 178–197 are Cytoplasmic-facing; it reads DRYLATVYPVWYHDQRSVRK. Residues 198 to 220 form a helical membrane-spanning segment; the sequence is AVGCIVFVWIFSIVISFAPFIGW. The Extracellular portion of the chain corresponds to 221-251; the sequence is QHMIPSFFSFNASIQRYQCILFTSSSYVLYS. Residue Asn-231 is glycosylated (N-linked (GlcNAc...) asparagine). The helical transmembrane segment at 252-272 threads the bilayer; sequence SMGSFVIPAILMAFMYVRIFV. Residues 273–495 are Cytoplasmic-facing; it reads VLHNQSRGVK…ELREQRATKR (223 aa). The helical transmembrane segment at 496–517 threads the bilayer; sequence MLLIMACFCVCWMPFLFMYILR. The Extracellular portion of the chain corresponds to 518-531; that stretch reads SVCDTCHMNQHFVA. The helical transmembrane segment at 532–553 threads the bilayer; that stretch reads AIIWLGYVNSSLNPVLYTLFND. The Cytoplasmic portion of the chain corresponds to 554-578; that stretch reads DFKVAFKRLIGARSPSAYRSPGPRR.

The protein belongs to the G-protein coupled receptor 1 family.

The protein resides in the cell membrane. Functionally, receptor for octopamine. Octopamine (OA) is a neurotransmitter, neurohormone, and neuromodulator in invertebrates. This receptor induces a long lasting opening of voltage- independent chloride channels, a process which seems to involve protein phosphorylation but does not require either cAPK or PKC. The rank order of potency for agonists is p-synephrine &gt; p-octopamine &gt; xylometazoline &gt; B-HT920 &gt; norepinephrine = clonidine &gt; epinephrine &gt; p-tyramine &gt; phenylephrine = oxymetazoline = mehoxamine = dopamine &gt; serotonin &gt; histamine. For antagonists, the rank order is rauwolscine = mianserin &gt; phentolamine &gt; chlorpromazine &gt; spiperone &gt; yohimbine &gt; propanolol &gt; alprenolol &gt; prazosine &gt; pindolol. In Lymnaea stagnalis (Great pond snail), this protein is Octopamine receptor 2.